The sequence spans 216 residues: Adenylate kinase (216 aa).

11–16 lines the ATP pocket; it reads GSGKGT. An NMP region spans residues 31 to 60; it reads ATGDLFRKAIECGDELGDTVKSYMERGELV. AMP-binding positions include T32, R37, 58 to 60, 86 to 89, and Q93; these read ELV and GFPR. The LID stretch occupies residues 127 to 163; the sequence is GRWVCRSCQSPYQSGCAEVTKGKCSRCQGELYQRPDD. R128 contacts ATP. The Zn(2+) site is built by C131, C134, C150, and C153. AMP-binding residues include R160 and R171. A199 contacts ATP.

Belongs to the adenylate kinase family. In terms of assembly, monomer.

The protein resides in the cytoplasm. It carries out the reaction AMP + ATP = 2 ADP. It participates in purine metabolism; AMP biosynthesis via salvage pathway; AMP from ADP: step 1/1. Catalyzes the reversible transfer of the terminal phosphate group between ATP and AMP. Plays an important role in cellular energy homeostasis and in adenine nucleotide metabolism. This Dehalococcoides mccartyi (strain ATCC BAA-2100 / JCM 16839 / KCTC 5957 / BAV1) protein is Adenylate kinase.